Consider the following 242-residue polypeptide: MLRSLTRRLLKLLFWLMLASALLVLALRWLPPPGTALMLERKIESWGSEQPLQLKRQWRPWNELPDHLKMAVIAAEDQKFAEHWGFDVGAIQAALAHNQSGGSLRGASTLSQQVAKNLFLWSGRSWPRKALEAWFTALIELFWPKERILEVYLNSVEWGDGIFGAEAAAQHHFGVGAPYLNRQQASQLAAVLPNPRRWSAGRPDAYVNRRAAWIRQQMTQLGGSHYLNQLKPRYPEWWPRWL.

The chain crosses the membrane as a helical span at residues 12–31 (LLFWLMLASALLVLALRWLP).

The protein belongs to the glycosyltransferase 51 family.

The protein resides in the cell inner membrane. The catalysed reaction is [GlcNAc-(1-&gt;4)-Mur2Ac(oyl-L-Ala-gamma-D-Glu-L-Lys-D-Ala-D-Ala)](n)-di-trans,octa-cis-undecaprenyl diphosphate + beta-D-GlcNAc-(1-&gt;4)-Mur2Ac(oyl-L-Ala-gamma-D-Glu-L-Lys-D-Ala-D-Ala)-di-trans,octa-cis-undecaprenyl diphosphate = [GlcNAc-(1-&gt;4)-Mur2Ac(oyl-L-Ala-gamma-D-Glu-L-Lys-D-Ala-D-Ala)](n+1)-di-trans,octa-cis-undecaprenyl diphosphate + di-trans,octa-cis-undecaprenyl diphosphate + H(+). It functions in the pathway cell wall biogenesis; peptidoglycan biosynthesis. Peptidoglycan polymerase that catalyzes glycan chain elongation from lipid-linked precursors. The polypeptide is Biosynthetic peptidoglycan transglycosylase (Ectopseudomonas mendocina (strain ymp) (Pseudomonas mendocina)).